The primary structure comprises 236 residues: 2,3,4,5-tetrahydropyridine-2,6-dicarboxylate N-acetyltransferase (236 aa).

This sequence belongs to the transferase hexapeptide repeat family. DapH subfamily.

It carries out the reaction (S)-2,3,4,5-tetrahydrodipicolinate + acetyl-CoA + H2O = L-2-acetamido-6-oxoheptanedioate + CoA. Its pathway is amino-acid biosynthesis; L-lysine biosynthesis via DAP pathway; LL-2,6-diaminopimelate from (S)-tetrahydrodipicolinate (acetylase route): step 1/3. Its function is as follows. Catalyzes the transfer of an acetyl group from acetyl-CoA to tetrahydrodipicolinate. The chain is 2,3,4,5-tetrahydropyridine-2,6-dicarboxylate N-acetyltransferase from Brevibacillus brevis (strain 47 / JCM 6285 / NBRC 100599).